We begin with the raw amino-acid sequence, 100 residues long: Testis development-related protein 1 (100 aa).

The tract at residues 73-100 is disordered; it reads GLGSLGGQDSSGSLVQRASCELESPYEL.

As to expression, expressed in the testis but not in any other non-reproductive tissues (at protein level). Mainly located in spermatogenic cells in seminiferous tubules of adult testis.

Its subcellular location is the cytoplasm. The sequence is that of Testis development-related protein 1 (TDRG1) from Homo sapiens (Human).